The primary structure comprises 1012 residues: MEVTIAGILERDLSEGELAEAIRGLREHGAFRGEGLPAAMSGLLSSCNSRLTSASSRIEGLSLLALAVEESPTDVFVQHCVSWLRSLLQIIQSQDPPRVVSLAVFVLRSLLAHSSALPELSREISTNHIPGLLTSLLGLRRQCLVPALEGIRSCFLSYPRACGSLRGKLTAFLLSLLDAENQQIQEVACQCYSLLPSLGSGFSQGIKHTENWERQIQSVICSLHSVFLQLYQGSETDTARYEGSGTELEFPSVEDDGTHGVLQLARRFTALGQCMRLLLREQFPAPVRVPVSDILSLVCRVVNVSPKNLSWHGEESLKLLLLPRVHSSILEILEATIIACGPRLLPFSAVICRLFPQLLLSWAAVKGITGIPSGQERPYSSLRCSVYRVLETWVTTCGISSGVLQGPMHHSDILLANLLSDITPPTDAIKMSTFVQLGAKKQKVSEVGDDDFQSHRKRDNTANVELCAAALKGLCCVILHCGSVIKEDVHRRLQELSIPLLLRLQQGSDQWLGPYISSDCRKELYRLLLCLTLTPNPKLPAPLHCAIRIFRGGTTEESLQVSRFSTEALAICRILIHPRVPSLQRPLPHLAPRPSVQSDAPTLRPPAALSTFPAMPPANHLPPRPTVPAMSTEPPIPAAVPSPPPEESFGEKPRRAVFIHFDKEEPSDVEISLESDSDDSVVIVPEGLFAKSDSKPEPSPPAVKPPTEEVTEQVAPSAVPSSSTAAPPPPPPPPAPPVCAGPSSAPVPIAEAPPPPQQEVDTVININSSDDEEDGEEDEEEGLYDDEDEEDYYDEEEDEDLEGLEEDDYDYEEDEEGITEEEEEDLEEEGEDDEEEVEDEECLMPDEMQIGSEAEEIPDGIETSSLHEGELEEGPPRLSPVQEDEAVDTGLLMLVESEDREPSGEAPGEGLPESDLTRSPPQPPVLTPPSPPDEPPPMEESDVPPLEEPDLEVAPVAEEPVEETEEKKPEEVTVEKPEPEPEEEEQIADADAMLADFVDCPPDDDKLPEPCT.

Short sequence motifs (LXXLL motif) lie at residues 21–25 (AIRGL), 63–67 (LLALA), 107–111 (LRSLL), 129–133 (IPGLL), 216–220 (IQSVI), 223–227 (LHSVF), 317–321 (LKLLL), 415–419 (LANLL), 524–528 (LYRLL), and 529–533 (LCLTL). 2 disordered regions span residues 586 to 651 (PLPH…SFGE) and 684 to 986 (VPEG…EEEQ). Composition is skewed to pro residues over residues 614–626 (AMPP…PRPT) and 634–646 (PPIP…PPPE). A compositionally biased stretch (low complexity) spans 714 to 725 (VAPSAVPSSSTA). Positions 726-739 (APPPPPPPPAPPVC) are enriched in pro residues. The segment covering 740 to 750 (AGPSSAPVPIA) has biased composition (low complexity). Over residues 769 to 844 (SDDEEDGEED…EEVEDEECLM (76 aa)) the composition is skewed to acidic residues. Residues 920-935 (PPQPPVLTPPSPPDEP) are compositionally biased toward pro residues. The segment covering 936 to 951 (PPMEESDVPPLEEPDL) has biased composition (acidic residues). Positions 965–979 (EEKKPEEVTVEKPEP) are enriched in basic and acidic residues.

Belongs to the RIX1/PELP1 family. In terms of assembly, component of some MLL1/MLL complex. Forms a signaling complex with SRC and estrogen receptors. In terms of tissue distribution, expressed in oocyte.

The protein resides in the nucleus. Its subcellular location is the cytoplasm. In terms of biological role, coactivator of estrogen receptor-mediated transcription and a corepressor of other nuclear hormone receptors and sequence-specific transcription factors. Regulates oocyte maturation. Enhances androgen receptor (AR)-mediated transcription in a SRC-dependent manner. The chain is Proline-, glutamic acid- and leucine-rich protein 1 (pelp1) from Xenopus laevis (African clawed frog).